Here is a 392-residue protein sequence, read N- to C-terminus: MRTVRDLEVEERRVLVRVDYNVPLEGGRVVDDTRIRATLPTLQWLLERRARIILCSHLGRPKGQVREELRLAPVAATLSGLLGQPVRSVRDIVGPEAQEMARRLQPGEVGMLENLRFDPREEQNDAEFAAALAALADCYVNDAFGAAHRAHASVVAVARLLPSAAGFLMEREVQALERVLRSDERPFVLVLGGAKVSDKIGVIENLLPRADALLLGGGMANTFLRARGLETGRSLVEEEKVPEAQRILDLAAARGVRVELPRDVVVAPTMSAVSQRRIVPVTAIPPDQAVYDIGPETVRAYSAVIAGARLLVWNGPMGVYEVPEFREGTKGIAEAVAGCSGFTLVGGGDSAAALQELGLAERVGHLSTGGGATLEYLEGRELPGVAVLMEEA.

Residues 19–21 (DYN), R34, 57–60 (HLGR), R116, and R149 each bind substrate. ATP contacts are provided by residues K199, E321, and 347-350 (GGDS).

This sequence belongs to the phosphoglycerate kinase family. As to quaternary structure, monomer.

Its subcellular location is the cytoplasm. The catalysed reaction is (2R)-3-phosphoglycerate + ATP = (2R)-3-phospho-glyceroyl phosphate + ADP. Its pathway is carbohydrate degradation; glycolysis; pyruvate from D-glyceraldehyde 3-phosphate: step 2/5. In Thermomicrobium roseum (strain ATCC 27502 / DSM 5159 / P-2), this protein is Phosphoglycerate kinase.